Here is a 199-residue protein sequence, read N- to C-terminus: Large ribosomal subunit protein bL25 (199 aa).

Belongs to the bacterial ribosomal protein bL25 family. CTC subfamily. As to quaternary structure, part of the 50S ribosomal subunit; part of the 5S rRNA/L5/L18/L25 subcomplex. Contacts the 5S rRNA. Binds to the 5S rRNA independently of L5 and L18.

Functionally, this is one of the proteins that binds to the 5S RNA in the ribosome where it forms part of the central protuberance. The sequence is that of Large ribosomal subunit protein bL25 from Herpetosiphon aurantiacus (strain ATCC 23779 / DSM 785 / 114-95).